The sequence spans 131 residues: Profilin (131 aa).

This sequence belongs to the profilin family. As to quaternary structure, occurs in many kinds of cells as a complex with monomeric actin in a 1:1 ratio.

It localises to the cytoplasm. The protein resides in the cytoskeleton. In terms of biological role, binds to actin and affects the structure of the cytoskeleton. At high concentrations, profilin prevents the polymerization of actin, whereas it enhances it at low concentrations. By binding to PIP2, it inhibits the formation of IP3 and DG. The chain is Profilin from Citrus sinensis (Sweet orange).